We begin with the raw amino-acid sequence, 214 residues long: Cytochrome b (214 aa).

Helical transmembrane passes span 31 to 51 (FGSMLLACLMTQIITGFFLAI), 75 to 96 (WIMQNTHAISASLFFICIYIHI), 111 to 131 (WLSGTTLLIILMATAFFGYVL), and 176 to 196 (FFALHFIFPFIIISMSSIHIL). 2 residues coordinate heme b: histidine 81 and histidine 95. Heme b contacts are provided by histidine 180 and histidine 194. Histidine 199 lines the a ubiquinone pocket.

The protein belongs to the cytochrome b family. In terms of assembly, the cytochrome bc1 complex contains 3 respiratory subunits (MT-CYB, CYC1 and UQCRFS1), 2 core proteins (UQCRC1 and UQCRC2) and probably 6 low-molecular weight proteins. The cofactor is heme b.

The protein localises to the mitochondrion inner membrane. Component of the ubiquinol-cytochrome c reductase complex (complex III or cytochrome b-c1 complex) that is part of the mitochondrial respiratory chain. The b-c1 complex mediates electron transfer from ubiquinol to cytochrome c. Contributes to the generation of a proton gradient across the mitochondrial membrane that is then used for ATP synthesis. The chain is Cytochrome b (MT-CYB) from Bothrops bilineatus (Green jararaca).